Consider the following 445-residue polypeptide: AVMGRNLALNIESRGYTVSIFNRSREKTEEVIAENPGKKLVPYYTVKEFVESLETPRRILLMVKAGAGTDAAIDSLKPYLDKGDIIIDGGNTFFQDTIRRNRELSAEGFNFIGTGVSGGEEGALKGPSIMPGGQKEAYELVAPILTKIAAVAEDGEPCVTYIGADGAGHYVKMVHNGIEYGDMQLIAEAYSLLKGGLNLSNEELAQTFTEWNNGELSSYLIDITKDIFTKKDEDGNYLVDVILDEAANKGTGKWTSQSALDLGEPLSLITESVFARYISSLKDQRVAASKVLSGPQAQPAGDKAEFIEKVRRALYLGKIVSYAQGFSQLRAASEEYNWDLNYGEIAKIFRAGCIIRAQFLQKITDAYAENPQIANLLLAPYFKQIADDYQQALRDVVAYAVQNGIPVPTFAAAVAYYDSYRAAFLPANLIQAQRDYFGAHTYKRI.

NADP(+) is bound by residues 1-4 (AVMG), 22-24 (NRS), 63-65 (VKA), and Asn-91. Residues Asn-91 and 117–119 (SGG) contribute to the substrate site. The Proton acceptor role is filled by Lys-172. 175–176 (HN) serves as a coordination point for substrate. The active-site Proton donor is the Glu-179. Residues Tyr-180, Lys-249, Arg-276, Arg-434, and His-440 each contribute to the substrate site.

The protein belongs to the 6-phosphogluconate dehydrogenase family. As to quaternary structure, homodimer.

It carries out the reaction 6-phospho-D-gluconate + NADP(+) = D-ribulose 5-phosphate + CO2 + NADPH. It functions in the pathway carbohydrate degradation; pentose phosphate pathway; D-ribulose 5-phosphate from D-glucose 6-phosphate (oxidative stage): step 3/3. Catalyzes the oxidative decarboxylation of 6-phosphogluconate to ribulose 5-phosphate and CO(2), with concomitant reduction of NADP to NADPH. This is 6-phosphogluconate dehydrogenase, decarboxylating (gnd) from Shigella dysenteriae.